The sequence spans 549 residues: DDB1- and CUL4-associated factor 11 (549 aa).

The segment covering 1 to 24 (MGSRNSSSAGSGSLEPSEGLSRRG) has biased composition (low complexity). A disordered region spans residues 1–40 (MGSRNSSSAGSGSLEPSEGLSRRGTGLRRSEEEEEEDEDV). Residues Ser-73 and Ser-75 each carry the phosphoserine modification. 7 WD repeats span residues 170-210 (TYSQ…HKFK), 216-258 (DVGW…TALD), 263-302 (ERRF…RTLQ), 305-345 (SHED…EDDP), 353-392 (GHQD…SREG), 435-480 (GVLH…KKLT), and 481-520 (NHKA…YFQD).

Interacts with DDB1 and CUL4A.

It functions in the pathway protein modification; protein ubiquitination. Functionally, may function as a substrate receptor for CUL4-DDB1 E3 ubiquitin-protein ligase complex. The protein is DDB1- and CUL4-associated factor 11 (Dcaf11) of Mus musculus (Mouse).